We begin with the raw amino-acid sequence, 859 residues long: ATP-dependent RNA helicase DDX24 (859 aa).

Lys17 carries the post-translational modification N6-acetyllysine. Position 60 is a phosphoserine (Ser60). The segment at 61–170 is disordered; sequence PAKNPSSLFS…KGLEPSQSTA (110 aa). Lys71 bears the N6-acetyllysine mark. A phosphoserine mark is found at Ser82 and Ser94. A compositionally biased stretch (basic residues) spans 94–105; the sequence is SPKKKIKLKKSK. The segment covering 106 to 115 has biased composition (polar residues); that stretch reads NVATEGTSTQ. A compositionally biased stretch (acidic residues) spans 125–139; that stretch reads LEAQGDDMVCDDPEA. The short motif at 192 to 220 is the Q motif element; that stretch reads SAWKDLFVPRPVLRALSFLGFSAPTPIQA. Positions 224–528 constitute a Helicase ATP-binding domain; the sequence is APAIRDKLDI…RILHKKHTKK (305 aa). 237–244 is a binding site for ATP; it reads AETGSGKT. A disordered region spans residues 262–300; the sequence is NAAPPPSNTEAPPGETRTEAGAETRSPGKAEAESDALPD. Positions 277 to 293 are enriched in basic and acidic residues; the sequence is TRTEAGAETRSPGKAEA. 2 positions are modified to phosphoserine: Ser287 and Ser295. Thr302 is modified (phosphothreonine). The tract at residues 326–376 is disordered; that stretch reads SDQALLFGDDDAGEGPSSLIREKPVPKQNENEEENLDKEQTGNLKQELDDK. A Glycyl lysine isopeptide (Lys-Gly) (interchain with G-Cter in SUMO2) cross-link involves residue Lys370. The short motif at 471–474 is the DEAD box element; the sequence is DEAD. The Helicase C-terminal domain occupies 578-723; sequence YLYYFLMQYP…LFPVQTKYMD (146 aa). Glycyl lysine isopeptide (Lys-Gly) (interchain with G-Cter in SUMO2) cross-links involve residues Lys624, Lys808, and Lys825. 2 stretches are compositionally biased toward polar residues: residues 799 to 814 and 823 to 833; these read PLFTESQKTKYPTQSG and PSKSESALSCL. The segment at 799-859 is disordered; that stretch reads PLFTESQKTK…EQPQPSTSAN (61 aa).

It belongs to the DEAD box helicase family. DDX24/MAK5 subfamily. In terms of assembly, interacts with FADD. Interacts with RIPK1; this interaction disrupts RLR signaling activation of IFN-dependent transcription factor IRF7. Interacts with NIP7. Interacts with EP300; this interaction prevents TP53 acetylation mediated by EP300. As to quaternary structure, (Microbial infection) Interacts with HIV-1 virus Gag and Rev proteins. Post-translationally, ubiquitinated by MDM2 without targeting DDX24 for proteasomal degradation. Instead, polyubiquitinated DDX24 promotes interaction with NIP7, a component of pre-rRNP processing complex, and associates with pre-rRNA molecules and pre-ribosomal particles. Ubiquitous. Most abundant in heart and brain, but with lowest levels in thymus and small intestine.

Its subcellular location is the cytoplasm. The protein resides in the nucleus. It carries out the reaction ATP + H2O = ADP + phosphate + H(+). Its function is as follows. ATP-dependent RNA helicase that plays a role in various aspects of RNA metabolism including pre-mRNA splicing and is thereby involved in different biological processes such as cell cycle regulation or innate immunity. Plays an inhibitory role in TP53 transcriptional activity and subsequently in TP53 controlled cell growth arrest and senescence by inhibiting its EP300 mediated acetylation. Negatively regulates cytosolic RNA-mediated innate immune signaling at least in part by affecting RIPK1/IRF7 interactions. Alternatively, possesses antiviral activity by recognizing gammaherpesvirus transcripts in the context of lytic reactivation. Plays an essential role in cell cycle regulation in vascular smooth muscle cells by interacting with and regulating FANCA (Fanconi anemia complementation group A) mRNA. Functionally, (Microbial infection) Plays a positive role in HIV-1 infection by promoting Rev-dependent nuclear export of viral RNAs and their packaging into virus particles. This Homo sapiens (Human) protein is ATP-dependent RNA helicase DDX24 (DDX24).